We begin with the raw amino-acid sequence, 329 residues long: Protein-arginine N-acetylglucosaminyltransferase NleB1 (329 aa).

The N-beta-linked (GlcNAc) arginine; by autocatalysis glycan is linked to Arg-13. Residue Gln-48 to Phe-50 participates in UDP-N-acetyl-alpha-D-glucosamine binding. Arg-53 carries N-beta-linked (GlcNAc) arginine; by autocatalysis glycosylation. Tyr-72 provides a ligand contact to UDP-N-acetyl-alpha-D-glucosamine. N-beta-linked (GlcNAc) arginine; by autocatalysis glycosylation is present at Arg-159. Residue Tyr-219 to Ala-222 participates in UDP-N-acetyl-alpha-D-glucosamine binding. Residues Asp-221–Asp-223 carry the DXD motif motif. Asp-223 lines the Mn(2+) pocket. Catalysis depends on Glu-253, which acts as the Proton acceptor. The N-beta-linked (GlcNAc) arginine; by autocatalysis glycan is linked to Arg-293. Asn-320 and Ser-322 together coordinate Mn(2+). UDP-N-acetyl-alpha-D-glucosamine is bound by residues Ser-322 and Ser-327–Trp-329.

It belongs to the glycosyltransferase NleB family. The cofactor is Mn(2+). Post-translationally, auto-glycosylated: arginine GlcNAcylation is required for activity toward death domain-containing host target proteins.

It is found in the secreted. Its subcellular location is the host cytoplasm. The enzyme catalyses L-arginyl-[protein] + UDP-N-acetyl-alpha-D-glucosamine = N(omega)-(N-acetyl-beta-D-glucosaminyl)-L-arginyl-[protein] + UDP + H(+). Protein-arginine N-acetylglucosaminyltransferase activity is inhibited by 100066N compound (flavone analog) and 102644N compound (a substituted isoxazole). Its function is as follows. Protein-arginine N-acetylglucosaminyltransferase effector that disrupts TNF signaling in infected cells, including NF-kappa-B signaling, apoptosis and necroptosis. Acts by catalyzing the transfer of a single N-acetylglucosamine (GlcNAc) to a conserved arginine residue in the death domain of host proteins such as FADD: arginine GlcNAcylation prevents homotypic/heterotypic death domain interactions and assembly of the oligomeric TNF-alpha receptor complex, thereby disrupting TNF signaling. Also acts on host proteins without a death domain: catalyzes arginine GlcNAcylation of host GAPDH protein, thereby preventing GAPDH interaction with TRAF2, leading to inhibit NF-kappa-B signaling. Catalyzes auto-GlcNAcylation, which is required for activity toward death domain-containing host target proteins. The protein is Protein-arginine N-acetylglucosaminyltransferase NleB1 of Escherichia coli O157:H7.